The chain runs to 127 residues: Large ribosomal subunit protein bL20 (127 aa).

Belongs to the bacterial ribosomal protein bL20 family.

In terms of biological role, binds directly to 23S ribosomal RNA and is necessary for the in vitro assembly process of the 50S ribosomal subunit. It is not involved in the protein synthesizing functions of that subunit. This is Large ribosomal subunit protein bL20 from Bifidobacterium longum (strain DJO10A).